Consider the following 246-residue polypeptide: tRNA (guanine-N(1)-)-methyltransferase (246 aa).

S-adenosyl-L-methionine is bound by residues glycine 112 and 131–136 (IGDYVL).

Belongs to the RNA methyltransferase TrmD family. Homodimer.

It localises to the cytoplasm. The catalysed reaction is guanosine(37) in tRNA + S-adenosyl-L-methionine = N(1)-methylguanosine(37) in tRNA + S-adenosyl-L-homocysteine + H(+). Functionally, specifically methylates guanosine-37 in various tRNAs. In Fervidobacterium nodosum (strain ATCC 35602 / DSM 5306 / Rt17-B1), this protein is tRNA (guanine-N(1)-)-methyltransferase.